A 349-amino-acid polypeptide reads, in one-letter code: Adenine deaminase (349 aa).

The Zn(2+) site is built by His-24, His-26, and His-204. Glu-207 acts as the Proton donor in catalysis. Asp-285 serves as a coordination point for Zn(2+). Asp-286 provides a ligand contact to substrate.

The protein belongs to the metallo-dependent hydrolases superfamily. Adenosine and AMP deaminases family. Adenine deaminase type 2 subfamily. Requires Zn(2+) as cofactor.

It catalyses the reaction adenine + H2O + H(+) = hypoxanthine + NH4(+). In terms of biological role, catalyzes the hydrolytic deamination of adenine to hypoxanthine. Plays an important role in the purine salvage pathway and in nitrogen catabolism. This Trichlorobacter lovleyi (strain ATCC BAA-1151 / DSM 17278 / SZ) (Geobacter lovleyi) protein is Adenine deaminase.